The sequence spans 606 residues: Transmembrane 9 superfamily member 1 (606 aa).

Residues 1–27 (MTVLGHPRSWSCRWWPLLLLLLLTGRE) form the signal peptide. N-linked (GlcNAc...) asparagine glycosylation is present at N178. Transmembrane regions (helical) follow at residues 237–257 (LSII…AVIL), 310–330 (VLGV…MALL), 339–359 (GAIN…SGYV), and 373–393 (VWNI…TWSV). A glycan (N-linked (GlcNAc...) asparagine) is linked at N401. The next 4 membrane-spanning stretches (helical) occupy residues 412–432 (ILLL…IGGI), 469–489 (VGGF…FATV), 499–519 (GILF…SIAL), and 535–555 (SVLS…FYYA). N559 carries N-linked (GlcNAc...) asparagine glycosylation. Residues 570–590 (FGYSLLTGYVFFLMLGTISFF) traverse the membrane as a helical segment.

The protein belongs to the nonaspanin (TM9SF) (TC 9.A.2) family.

Its subcellular location is the lysosome membrane. The protein localises to the cytoplasmic vesicle. It localises to the autophagosome membrane. Its function is as follows. Plays an essential role in autophagy. The polypeptide is Transmembrane 9 superfamily member 1 (TM9SF1) (Bos taurus (Bovine)).